The chain runs to 264 residues: Thymidylate synthase (264 aa).

A dUMP-binding site is contributed by Arg21. Residue His51 participates in (6R)-5,10-methylene-5,6,7,8-tetrahydrofolate binding. 126–127 (RR) serves as a coordination point for dUMP. The active-site Nucleophile is the Cys146. DUMP-binding positions include 166–169 (RSAD), Asn177, and 207–209 (HIY). Asp169 contributes to the (6R)-5,10-methylene-5,6,7,8-tetrahydrofolate binding site. Ala263 lines the (6R)-5,10-methylene-5,6,7,8-tetrahydrofolate pocket.

It belongs to the thymidylate synthase family. Bacterial-type ThyA subfamily. As to quaternary structure, homodimer.

Its subcellular location is the cytoplasm. It carries out the reaction dUMP + (6R)-5,10-methylene-5,6,7,8-tetrahydrofolate = 7,8-dihydrofolate + dTMP. It participates in pyrimidine metabolism; dTTP biosynthesis. Catalyzes the reductive methylation of 2'-deoxyuridine-5'-monophosphate (dUMP) to 2'-deoxythymidine-5'-monophosphate (dTMP) while utilizing 5,10-methylenetetrahydrofolate (mTHF) as the methyl donor and reductant in the reaction, yielding dihydrofolate (DHF) as a by-product. This enzymatic reaction provides an intracellular de novo source of dTMP, an essential precursor for DNA biosynthesis. The chain is Thymidylate synthase from Ruthia magnifica subsp. Calyptogena magnifica.